The sequence spans 427 residues: tRNA(Ile)-lysidine synthase (427 aa).

Position 27-32 (27-32) interacts with ATP; it reads SGGVDS.

This sequence belongs to the tRNA(Ile)-lysidine synthase family.

It is found in the cytoplasm. The enzyme catalyses cytidine(34) in tRNA(Ile2) + L-lysine + ATP = lysidine(34) in tRNA(Ile2) + AMP + diphosphate + H(+). Ligates lysine onto the cytidine present at position 34 of the AUA codon-specific tRNA(Ile) that contains the anticodon CAU, in an ATP-dependent manner. Cytidine is converted to lysidine, thus changing the amino acid specificity of the tRNA from methionine to isoleucine. The sequence is that of tRNA(Ile)-lysidine synthase from Streptococcus equi subsp. equi (strain 4047).